Reading from the N-terminus, the 206-residue chain is Small ribosomal subunit protein uS4 (206 aa).

Residues 96–156 (TRLDNVVYRM…EKSRTQARIK (61 aa)) enclose the S4 RNA-binding domain.

It belongs to the universal ribosomal protein uS4 family. In terms of assembly, part of the 30S ribosomal subunit. Contacts protein S5. The interaction surface between S4 and S5 is involved in control of translational fidelity.

Functionally, one of the primary rRNA binding proteins, it binds directly to 16S rRNA where it nucleates assembly of the body of the 30S subunit. With S5 and S12 plays an important role in translational accuracy. The polypeptide is Small ribosomal subunit protein uS4 (Shewanella sp. (strain MR-4)).